Reading from the N-terminus, the 117-residue chain is UPF0344 protein GTNG_0604 (117 aa).

A run of 4 helical transmembrane segments spans residues 1–21, 39–59, 61–81, and 97–117; these read MTHA…IAVS, LFYI…ASIS, LYWL…MVLV, and VIAL…FDLF.

The protein belongs to the UPF0344 family.

It localises to the cell membrane. The chain is UPF0344 protein GTNG_0604 from Geobacillus thermodenitrificans (strain NG80-2).